A 171-amino-acid chain; its full sequence is Serine acetyltransferase (171 aa).

Belongs to the transferase hexapeptide repeat family.

It localises to the cytoplasm. It catalyses the reaction L-serine + acetyl-CoA = O-acetyl-L-serine + CoA. It functions in the pathway amino-acid biosynthesis; L-cysteine biosynthesis; L-cysteine from L-serine: step 1/2. The sequence is that of Serine acetyltransferase (cysE) from Helicobacter pylori (strain ATCC 700392 / 26695) (Campylobacter pylori).